Reading from the N-terminus, the 572-residue chain is Transducin-like enhancer protein 6 (572 aa).

Disordered regions lie at residues 1–30 (MTSRDQPRPKGPPKSTSPCPGISNSESSPT), 92–121 (QSEEVSPAEPASPGTPQQVKDKTLQESSFE), and 174–236 (KAKP…VQEP). Over residues 14–30 (KSTSPCPGISNSESSPT) the composition is skewed to polar residues. WD repeat units lie at residues 284-322 (AHGELVLATAISSFTRHVFTCGRRGIKVWSLTGQVAEDR), 332-372 (TPGA…LHVK), 377-416 (CAGLNCQALDANLDANLAFASFTSGVVRIWDLRDQSVVRD), 419-456 (GYPDGVKSIVVKGYNIWTGGPDACLRCWDQRTIMKPLE), 458-497 (QFKSQIMSLSHSPQEDWVLLGMANGQQWLQSTSGSQRHMV), 499-538 (QKDSVILSVKFSPFGQWWASVGMDDFLGVYSMPAGTKVFE), and 540-571 (PEMSPVTCCDVSSNNRLVVTGSGEHASVYQIT). Position 510 is a phosphoserine; by PKA (S510).

Belongs to the WD repeat Groucho/TLE family. In terms of assembly, homodimers. Component of the subcortical maternal complex (SCMC), at least composed of NLRP5, KHDC3, OOEP, and TLE6. Within the complex, interacts with NLRP5, KHDC3 and OOEP. The SCMC may facilitate translocation of its components between the nuclear and cytoplasmic compartments. As part of the SCMC interacts with the SCMC-associated protein ZBED3. As part of the SCMC interacts with the SCMC-associated protein NLRP4F. As part of the SCMC interacts with the SCMC-associated protein CFL1/Cofilin-1. Interacts with FOXG1/BF-1; the interaction inhibits TLE1 interaction with FOXG1/BF-1. Interacts with NFATC1. Interacts with PAX6. Component of the subcortical maternal complex (SCMC), at least composed of NLRP5, KHDC3L, OOEP, and TLE6 isoform 1. Within the complex, interacts with NLRP5, KHDC3L and OOEP. The SCMC may facilitate translocation of its components between the nuclear and cytoplasmic compartments.

The protein localises to the cytoplasm. It is found in the nucleus. Its function is as follows. Component of the subcortical maternal complex (SCMC), a multiprotein complex that plays a key role in early embryonic development. The SCMC complex is a structural constituent of cytoplasmic lattices, which consist in fibrous structures found in the cytoplasm of oocytes and preimplantation embryos. They are required to store maternal proteins critical for embryonic development, such as proteins that control epigenetic reprogramming of the preimplantation embryo, and prevent their degradation or activation. Also required for spermatogenesis: regulates spermatogonia proliferation and cell cycle progression, potentially via regulation of cell cycle regulatory genes such as; CEBPB, CEBPA, CSF3, PCNA, and CDK4. Suppresses FOXG1/BF-1-mediated transcriptional repression by inhibiting interaction of the transcriptional corepressor TLE1 with FOXG1 which promotes cortical neuron differentiation. Acts as a transcriptional corepressor of NFATC1-mediated gene expression by contributing to PAX6-mediated repression. Component of the subcortical maternal complex (SCMC), a multiprotein complex that plays a key role in early embryonic development. This Homo sapiens (Human) protein is Transducin-like enhancer protein 6.